A 456-amino-acid polypeptide reads, in one-letter code: NADPH-ferredoxin reductase FprA (456 aa).

Serine 17, glutamate 43, leucine 51, and valine 87 together coordinate FAD. NADP(+) is bound by residues arginine 113, 158-161 (NGNV), 202-203 (RR), and glutamate 214. Residues tryptophan 362 and 369–371 (GVI) each bind FAD. Glycine 369 serves as a coordination point for NADP(+).

It belongs to the ferredoxin--NADP reductase type 1 family. As to quaternary structure, monomer. The cofactor is FAD.

It carries out the reaction 2 reduced [2Fe-2S]-[ferredoxin] + NADP(+) + H(+) = 2 oxidized [2Fe-2S]-[ferredoxin] + NADPH. Functionally, may serve as electron transfer protein and supply electrons to P450 systems. The sequence is that of NADPH-ferredoxin reductase FprA (fprA) from Mycobacterium leprae (strain TN).